A 191-amino-acid chain; its full sequence is Protein Ves (191 aa).

Belongs to the Ves family.

This is Protein Ves from Shigella boydii serotype 18 (strain CDC 3083-94 / BS512).